The primary structure comprises 398 residues: Succinate--CoA ligase [ADP-forming] subunit beta (398 aa).

An ATP-grasp domain is found at 9 to 254 (KALLHEFGVP…ETEEDAKEIE (246 aa)). ATP contacts are provided by residues Lys-46, 53–55 (GRG), Glu-109, Ser-112, and Glu-117. Mg(2+) is bound by residues Asn-209 and Asp-223. Residues Asn-274 and 331–333 (GIM) each bind substrate.

Belongs to the succinate/malate CoA ligase beta subunit family. In terms of assembly, heterotetramer of two alpha and two beta subunits. Requires Mg(2+) as cofactor.

The catalysed reaction is succinate + ATP + CoA = succinyl-CoA + ADP + phosphate. The enzyme catalyses GTP + succinate + CoA = succinyl-CoA + GDP + phosphate. The protein operates within carbohydrate metabolism; tricarboxylic acid cycle; succinate from succinyl-CoA (ligase route): step 1/1. In terms of biological role, succinyl-CoA synthetase functions in the citric acid cycle (TCA), coupling the hydrolysis of succinyl-CoA to the synthesis of either ATP or GTP and thus represents the only step of substrate-level phosphorylation in the TCA. The beta subunit provides nucleotide specificity of the enzyme and binds the substrate succinate, while the binding sites for coenzyme A and phosphate are found in the alpha subunit. The sequence is that of Succinate--CoA ligase [ADP-forming] subunit beta from Bradyrhizobium sp. (strain ORS 278).